Consider the following 209-residue polypeptide: Transcription elongation factor A protein-like 4 (209 aa).

N-acetylmethionine is present on methionine 1. The disordered stretch occupies residues 1 to 125; sequence MEKLYNENEG…VPRKAKRKTN (125 aa). Over residues 25–96 the composition is skewed to basic and acidic residues; that stretch reads QDERKPEVAC…GSEREGKPES (72 aa). Serine 88 and serine 96 each carry phosphoserine.

The protein belongs to the TFS-II family. TFA subfamily.

It is found in the nucleus. Its function is as follows. May be involved in transcriptional regulation. The sequence is that of Transcription elongation factor A protein-like 4 (TCEAL4) from Pongo abelii (Sumatran orangutan).